The chain runs to 857 residues: Envelope glycoprotein B (857 aa).

An N-terminal signal peptide occupies residues 1 to 21; that stretch reads MTRRRVLSVVVLLAALACRLG. Residues 22-732 lie on the Virion surface side of the membrane; the sequence is AQTPEQPAPP…SGFISFFKNP (711 aa). 5 disulfides stabilise this stretch: Cys51/Cys528, Cys68/Cys484, Cys141/Cys206, Cys295/Cys342, and Cys551/Cys588. Asn76 carries an N-linked (GlcNAc...) asparagine; by host glycan. Positions 108 to 114 are involved in fusion and/or binding to host membrane; the sequence is IYNGWYA. Asn163 carries an N-linked (GlcNAc...) asparagine; by host glycan. An involved in fusion and/or binding to host membrane region spans residues 192–200; that stretch reads GWLIWTYRT. Asn290, Asn329, Asn348, and Asn395 each carry an N-linked (GlcNAc...) asparagine; by host glycan. The disordered stretch occupies residues 398–453; that stretch reads ELTTPTSSPPSSPSPPAPSAARGSTPAAVLRRRRRDAGNATTPVPPTAPGKSLGTL. Residues 404 to 415 show a composition bias toward pro residues; it reads SSPPSSPSPPAP. Residues 416–425 are compositionally biased toward low complexity; it reads SAARGSTPAA. Residues Asn436, Asn563, and Asn629 are each glycosylated (N-linked (GlcNAc...) asparagine; by host). An oligomerization region spans residues 561 to 620; the sequence is FINDTKTYEGQLGTDNEIFLTKKMTEVCQATSQYYFQSGNEIHVYNDYHHFKTIELDGIA. 2 hydrophobic membrane proximal region regions span residues 678-730 and 709-729; these read LDNA…SFFK and NLVSTVGGLFSSLVSGFISFF. Residues 733–753 form a helical membrane-spanning segment; the sequence is FGGMLILVLVAGVVILVISLT. The Intravirion portion of the chain corresponds to 754–857; the sequence is RRTRQMSQQP…ALLGEAETEF (104 aa). The interval 832-857 is disordered; the sequence is FPGLRRRRYHDPETAAALLGEAETEF. A compositionally biased stretch (low complexity) spans 845–857; that stretch reads TAAALLGEAETEF.

It belongs to the herpesviridae glycoprotein B family. As to quaternary structure, homotrimer; disulfide-linked. Binds to heparan sulfate proteoglycans. Interacts with gH/gL heterodimer. Post-translationally, a proteolytic cleavage by host furin generates two subunits that remain linked by disulfide bonds.

The protein resides in the virion membrane. Its subcellular location is the host cell membrane. It is found in the host endosome membrane. It localises to the host Golgi apparatus membrane. In terms of biological role, envelope glycoprotein that forms spikes at the surface of virion envelope. Essential for the initial attachment to heparan sulfate moieties of the host cell surface proteoglycans. Involved in fusion of viral and cellular membranes leading to virus entry into the host cell. Following initial binding to its host receptors, membrane fusion is mediated by the fusion machinery composed at least of gB and the heterodimer gH/gL. May be involved in the fusion between the virion envelope and the outer nuclear membrane during virion egress. The protein is Envelope glycoprotein B of Epstein-Barr virus (strain B95-8) (HHV-4).